The following is a 43-amino-acid chain: Hainantoxin F5-22.36 (43 aa).

3 disulfides stabilise this stretch: C1-C19, C8-C24, and C18-C38.

The protein belongs to the neurotoxin 14 (magi-1) family. 02 (HWTX-XVIc) subfamily. In terms of tissue distribution, expressed by the venom gland.

It localises to the secreted. Functionally, probable ion channel inhibitor. This chain is Hainantoxin F5-22.36, found in Cyriopagopus hainanus (Chinese bird spider).